A 1496-amino-acid chain; its full sequence is MTDTNELFEDQTTALQNSAPIAPLANPQHTVSRGKFRSLTLINWNGFFARTFDLDELVTTLSGGNGAGKSTTMAGFVTALIPDLTLLNFRNTTEAGSTSSSRDKGLYGKLKAGVCYAVLESLNSRGQRVITGVRLQQVAGRDKKVDIRSFSLQNVPMSDSIISILTEQVGEKARVLPLADLKDKFDGSEVLFKQYHSITDYHSFMFDLGVIPKRLRSSADRSKFYKLIEASLYGGISSVITKSLRDYLLPENTGVRQAFQDMESALRENRMTLEAIKVTQSDRDMFKRLITESTNYVSADYMRNANERRGNVQIALEQRRAWYESKSKLELEQQRLIEFSREVADISENESSLEAEYNSANDHLNLVMNALRHQEKIERYQNEVAELNEKLEEQQIALEEVSEQVETAQARADDADDQVEELRSQMADYQQALDAQQTRALQYQQAIAALEKAKQLCGLPHLDLHNVEDYHAEFAAQADDLTDQVFELEQRLSVSDMAKTQFEKAYELVCKISGEIDRSEAWNEARSLLTAFTDQKMQATQAVALRQKLADLEQRLHQQQNAERLLAEFNQKAQTQFETAEELEGYFEQQQARLEDVEAELAEFVEVRSTQRQQREQLNQQYNQLAKTAPAWHTAQSALARLEEQCGEKFEASQSVMQFMQNMLTKEREATLARDELARREAALDAQITRLSQPDGSDDVRLNQLAERFGGVLLSELYDDVSIDDAPYFSALYGEARHAIVVRDLESVKAQLEKLDDCPTDLYLIEGDPSAFDDAVFTAEELAEGVVVKVSDRQWRYSKFPEVPLFGRAAREKHLETLKAERDEVSEQHAERAFDVQKCQRLHQHLSQFVGTHLSLAFQPNPEEQMQEIAAERTEIERELNQAAGNEQQLRSQLDSAKAKLQMLNKILPLVSLLEDETLADRAEECRAQLDEAEEDEQFVRQFGNYLTQLEPIAASLKSDPAKFEQLEQDYRQAKAEQKQVQQKVFALSDVIQRRVHFSYEEAIGSEGSALTEQLRTRLENAQREREQARDQLRQAQAQFTQYNQVLTGLRSSCDAKTQMLQELIREIDDLGVRGDIGAEERARSRRDELQQRLSQQRSRKGYLDKQLGTIEAEIDNLTRTLRKAERDYHTQRELVVQAKVSWCLVLKLSRNSDVEKRLNRRELAYQSAEELRSISDKALGALRTAVADNEYLRDSLRASEDSRKPENKVAFFIAVYQHLRERIRQDIIKTDDPIDAIEQMEIELSRLTNELTSREKKLAISAESVANILRKTIQREQNRILQLNQGLQNIAFGQVKGVRLVVNIRDTHAILLNALSNGREEHKDLFDSQKLSFSEALAMLYKRVNPHIEMGQRTPQTIGEELLDYRNYLDLEVETFRGADGWMRAESSALSTGEAIGTGMSILLMVVQSWEEESRRMRAKDILPSRLLFLDEAARLDATSINTLFELCERLDMQLLIAAPENISPERGTTYKLVRKITNNQEYVHVVGLKGFGQQ.

63–70 is an ATP binding site; sequence GGNGAGKS. Coiled coils occupy residues 328 to 493, 536 to 632, 808 to 832, 861 to 1171, and 1235 to 1291; these read KLEL…QRLS, KMQA…APAW, RAAR…HAER, NPEE…SAEE, and IDAI…LQNI. Residues 694 to 811 form a flexible hinge region; it reads PDGSDDVRLN…EVPLFGRAAR (118 aa). The segment covering 1082–1091 has biased composition (basic and acidic residues); sequence RARSRRDELQ. The segment at 1082–1101 is disordered; sequence RARSRRDELQQRLSQQRSRK.

This sequence belongs to the SMC family. MukB subfamily. Homodimerization via its hinge domain. Binds to DNA via its C-terminal region. Interacts, and probably forms a ternary complex, with MukE and MukF via its C-terminal region. The complex formation is stimulated by calcium or magnesium. Interacts with tubulin-related protein FtsZ.

It localises to the cytoplasm. Its subcellular location is the nucleoid. Plays a central role in chromosome condensation, segregation and cell cycle progression. Functions as a homodimer, which is essential for chromosome partition. Involved in negative DNA supercoiling in vivo, and by this means organize and compact chromosomes. May achieve or facilitate chromosome segregation by condensation DNA from both sides of a centrally located replisome during cell division. The polypeptide is Chromosome partition protein MukB (Actinobacillus pleuropneumoniae serotype 5b (strain L20)).